Consider the following 463-residue polypeptide: NADH dehydrogenase [ubiquinone] iron-sulfur protein 2, mitochondrial (463 aa).

Residues 1–33 (MAALRALCGFRGVAAQVLRPGAGVRLPIQPSRG) constitute a mitochondrion transit peptide. Residue Lys62 is modified to N6-acetyllysine. Residue Arg118 is modified to Symmetric dimethylarginine. The [4Fe-4S] cluster site is built by Cys326, Cys332, and Cys347.

It belongs to the complex I 49 kDa subunit family. As to quaternary structure, core subunit of respiratory chain NADH dehydrogenase (Complex I) which is composed of 45 different subunits. Component of the iron-sulfur (IP) fragment of the enzyme. Interacts with NDUFAF3. Interacts with NDUFAF7. Interacts with CERS2. [4Fe-4S] cluster serves as cofactor. Dimethylation at Arg-118 by NDUFAF7 takes place after NDUFS2 assembles into the complex I, leading to stabilize the early intermediate complex.

Its subcellular location is the mitochondrion inner membrane. The catalysed reaction is a ubiquinone + NADH + 5 H(+)(in) = a ubiquinol + NAD(+) + 4 H(+)(out). Functionally, core subunit of the mitochondrial membrane respiratory chain NADH dehydrogenase (Complex I) which catalyzes electron transfer from NADH through the respiratory chain, using ubiquinone as an electron acceptor. Essential for the catalytic activity of complex I. Essential for the assembly of complex I. Redox-sensitive, critical component of the oxygen-sensing pathway in the pulmonary vasculature which plays a key role in acute pulmonary oxygen-sensing and hypoxic pulmonary vasoconstriction. Plays an important role in carotid body sensing of hypoxia. Essential for glia-like neural stem and progenitor cell proliferation, differentiation and subsequent oligodendrocyte or neuronal maturation. The chain is NADH dehydrogenase [ubiquinone] iron-sulfur protein 2, mitochondrial (NDUFS2) from Homo sapiens (Human).